Here is a 114-residue protein sequence, read N- to C-terminus: Helper of Tim protein 13 (114 aa).

The CHY-type; degenerate zinc-finger motif lies at 10–90; the sequence is LVDKESRCEH…DSLQCPNCRS (81 aa). Cysteine 17, histidine 19, cysteine 40, cysteine 43, cysteine 67, cysteine 70, cysteine 85, and cysteine 88 together coordinate Zn(2+).

As to quaternary structure, interacts with the small Tim proteins.

Its subcellular location is the mitochondrion intermembrane space. The protein localises to the mitochondrion membrane. In terms of biological role, required for the assembly or recycling of the small Tim proteins in the mitochondrial intermembrane, thereby participating in the import and insertion of multi-pass transmembrane proteins into the mitochondrial inner membrane. This is Helper of Tim protein 13 (HOT13) from Kluyveromyces lactis (strain ATCC 8585 / CBS 2359 / DSM 70799 / NBRC 1267 / NRRL Y-1140 / WM37) (Yeast).